We begin with the raw amino-acid sequence, 548 residues long: Membrane protein insertase YidC (548 aa).

The chain crosses the membrane as a helical span at residues 6-26 (NLLVIALLFVSFMIWQAWEQD). The interval 28–55 (NPQPQAQQTTQTTTTAAGSAADQGVPAS) is disordered. Over residues 30–50 (QPQAQQTTQTTTTAAGSAADQ) the composition is skewed to low complexity. 4 helical membrane passes run 350–370 (FVGN…GIMY), 420–440 (LGGC…YYML), 458–478 (LSAQ…MFFI), and 499–519 (PVIF…YYIV).

This sequence belongs to the OXA1/ALB3/YidC family. Type 1 subfamily. In terms of assembly, interacts with the Sec translocase complex via SecD. Specifically interacts with transmembrane segments of nascent integral membrane proteins during membrane integration.

The protein localises to the cell inner membrane. In terms of biological role, required for the insertion and/or proper folding and/or complex formation of integral membrane proteins into the membrane. Involved in integration of membrane proteins that insert both dependently and independently of the Sec translocase complex, as well as at least some lipoproteins. Aids folding of multispanning membrane proteins. The chain is Membrane protein insertase YidC from Shigella dysenteriae serotype 1 (strain Sd197).